The sequence spans 77 residues: U9-lycotoxin-Ls1a (77 aa).

Positions 1 to 20 (MKLLLFTALVLVVIVSLIEA) are cleaved as a signal peptide. The propeptide occupies 21–26 (EAENER).

Belongs to the neurotoxin 19 (CSTX) family. 08 (U8-Lctx) subfamily. Contains 4 disulfide bonds. As to expression, expressed by the venom gland.

The protein localises to the secreted. This Lycosa singoriensis (Wolf spider) protein is U9-lycotoxin-Ls1a.